A 385-amino-acid polypeptide reads, in one-letter code: UDP-4-amino-4-deoxy-L-arabinose--oxoglutarate aminotransferase (385 aa).

Residue lysine 188 is the Proton acceptor of the active site. At lysine 188 the chain carries N6-(pyridoxal phosphate)lysine.

Belongs to the DegT/DnrJ/EryC1 family. ArnB subfamily. As to quaternary structure, homodimer. It depends on pyridoxal 5'-phosphate as a cofactor.

It catalyses the reaction UDP-4-amino-4-deoxy-beta-L-arabinose + 2-oxoglutarate = UDP-beta-L-threo-pentopyranos-4-ulose + L-glutamate. It participates in nucleotide-sugar biosynthesis; UDP-4-deoxy-4-formamido-beta-L-arabinose biosynthesis; UDP-4-deoxy-4-formamido-beta-L-arabinose from UDP-alpha-D-glucuronate: step 2/3. Its pathway is bacterial outer membrane biogenesis; lipopolysaccharide biosynthesis. Its activity is regulated as follows. Inhibited by L-cycloserine. Its function is as follows. Catalyzes the conversion of UDP-4-keto-arabinose (UDP-Ara4O) to UDP-4-amino-4-deoxy-L-arabinose (UDP-L-Ara4N). The modified arabinose is attached to lipid A and is required for resistance to polymyxin and cationic antimicrobial peptides. The polypeptide is UDP-4-amino-4-deoxy-L-arabinose--oxoglutarate aminotransferase (arnB) (Salmonella typhimurium (strain LT2 / SGSC1412 / ATCC 700720)).